Consider the following 683-residue polypeptide: DNA-directed RNA polymerase subunit beta' (683 aa).

Cys-69, Cys-71, Cys-87, and Cys-90 together coordinate Zn(2+). Positions 489, 491, and 493 each coordinate Mg(2+).

The protein belongs to the RNA polymerase beta' chain family. RpoC1 subfamily. As to quaternary structure, in plastids the minimal PEP RNA polymerase catalytic core is composed of four subunits: alpha, beta, beta', and beta''. When a (nuclear-encoded) sigma factor is associated with the core the holoenzyme is formed, which can initiate transcription. Requires Mg(2+) as cofactor. Zn(2+) is required as a cofactor.

The protein localises to the plastid. It localises to the chloroplast. The enzyme catalyses RNA(n) + a ribonucleoside 5'-triphosphate = RNA(n+1) + diphosphate. Its function is as follows. DNA-dependent RNA polymerase catalyzes the transcription of DNA into RNA using the four ribonucleoside triphosphates as substrates. The protein is DNA-directed RNA polymerase subunit beta' of Triticum aestivum (Wheat).